Here is a 206-residue protein sequence, read N- to C-terminus: MARYIGPKCKLSRREGTDLFLKSGVRALESKCNIEAAPGIHGQRRGRQSDYGTQLREKQKVRRIYGVLERQFRGYYQAAASKKGATGENLLQLLECRLDNVVYRMGFGSTRSESRQLVSHKAISVNGKTVNIPSYQVRPGDVVAVREKSLAQLRIVQALELCAQRGRVEWVDVDAAKKSGVFKNVPARSDLSADINENLIVELYSK.

Residues 96–160 (CRLDNVVYRM…AQLRIVQALE (65 aa)) form the S4 RNA-binding domain.

The protein belongs to the universal ribosomal protein uS4 family. Part of the 30S ribosomal subunit. Contacts protein S5. The interaction surface between S4 and S5 is involved in control of translational fidelity.

In terms of biological role, one of the primary rRNA binding proteins, it binds directly to 16S rRNA where it nucleates assembly of the body of the 30S subunit. Functionally, with S5 and S12 plays an important role in translational accuracy. The polypeptide is Small ribosomal subunit protein uS4 (Pseudomonas putida (strain GB-1)).